A 234-amino-acid polypeptide reads, in one-letter code: Urease accessory protein UreF (234 aa).

Belongs to the UreF family. UreD, UreF and UreG form a complex that acts as a GTP-hydrolysis-dependent molecular chaperone, activating the urease apoprotein by helping to assemble the nickel containing metallocenter of UreC. The UreE protein probably delivers the nickel.

The protein localises to the cytoplasm. Its function is as follows. Required for maturation of urease via the functional incorporation of the urease nickel metallocenter. The chain is Urease accessory protein UreF from Kocuria rhizophila (strain ATCC 9341 / DSM 348 / NBRC 103217 / DC2201).